Consider the following 282-residue polypeptide: Protein Ku (282 aa).

The Ku domain maps to 9-189 (VNFGLVNVPV…KPELSEAELK (181 aa)).

As to quaternary structure, homodimer. Interacts with host LigD, maybe via the LigD Pol domain.

Required for replication of viruses with short cos ends (4 bases). Stimulates dsDNA end-joining by host LigD; in conjunction with M.smegmatis or M.tuberculosis LigD can reconstitute NHEJ in S.cerevisiae. Binds dsDNA with either blunt, 5'- or 3-overhangs, protecting it from host exonuclease degradation. This is Protein Ku (206) from Mycobacterium phage Omega (Mycobacteriophage Omega).